We begin with the raw amino-acid sequence, 193 residues long: Putative manganese efflux pump MntP (193 aa).

A run of 6 helical transmembrane segments spans residues 3–23, 37–57, 66–86, 109–131, 146–166, and 171–191; these read PLSI…AAIG, VRAG…GWML, AAFD…HMIV, LALA…SLAF, CTLS…ALIG, and ILGG…HLSG.

Belongs to the MntP (TC 9.B.29) family.

It localises to the cell inner membrane. Functionally, probably functions as a manganese efflux pump. In Xanthomonas campestris pv. campestris (strain 8004), this protein is Putative manganese efflux pump MntP.